The sequence spans 232 residues: MEQGAKEIPVVYLHDIRRQYTQGETKLTILDGTKLALWAGQSVALVAPSGSGKSTLLHIAGLLESPDAGEVYIGGTATSGLSDVERTRIRRTDIGFVYQSHRLLPEFTALENVMLPQMIRGLRRSETVKRAREILSYLGLEDRVTHRPAELSGGEQQRVAIARAVANAPRVLLADEPTGNLDPNTADHVFNALMQLVKATRVAMLIATHNMELADRMDRRVSLENGHVVELD.

The ABC transporter domain occupies 11–231 (VYLHDIRRQY…SLENGHVVEL (221 aa)). 47 to 54 (APSGSGKS) contacts ATP.

This sequence belongs to the ABC transporter superfamily. Lipoprotein translocase (TC 3.A.1.125) family. As to quaternary structure, the complex is composed of two ATP-binding proteins (LolD) and two transmembrane proteins (LolC and LolE).

It localises to the cell inner membrane. Its function is as follows. Part of the ABC transporter complex LolCDE involved in the translocation of mature outer membrane-directed lipoproteins, from the inner membrane to the periplasmic chaperone, LolA. Responsible for the formation of the LolA-lipoprotein complex in an ATP-dependent manner. This is Lipoprotein-releasing system ATP-binding protein LolD from Nitrobacter hamburgensis (strain DSM 10229 / NCIMB 13809 / X14).